A 200-amino-acid chain; its full sequence is Probable molybdenum cofactor guanylyltransferase (200 aa).

GTP contacts are provided by residues 9–11, Lys-21, Asp-69, and Asp-100; that span reads LAG. Residue Asp-100 participates in Mg(2+) binding.

Belongs to the MobA family. It depends on Mg(2+) as a cofactor.

The protein resides in the cytoplasm. The enzyme catalyses Mo-molybdopterin + GTP + H(+) = Mo-molybdopterin guanine dinucleotide + diphosphate. Functionally, transfers a GMP moiety from GTP to Mo-molybdopterin (Mo-MPT) cofactor (Moco or molybdenum cofactor) to form Mo-molybdopterin guanine dinucleotide (Mo-MGD) cofactor. In Bacillus cereus (strain AH820), this protein is Probable molybdenum cofactor guanylyltransferase.